A 236-amino-acid polypeptide reads, in one-letter code: Phosphoribosylaminoimidazole-succinocarboxamide synthase (236 aa).

It belongs to the SAICAR synthetase family.

The catalysed reaction is 5-amino-1-(5-phospho-D-ribosyl)imidazole-4-carboxylate + L-aspartate + ATP = (2S)-2-[5-amino-1-(5-phospho-beta-D-ribosyl)imidazole-4-carboxamido]succinate + ADP + phosphate + 2 H(+). Its pathway is purine metabolism; IMP biosynthesis via de novo pathway; 5-amino-1-(5-phospho-D-ribosyl)imidazole-4-carboxamide from 5-amino-1-(5-phospho-D-ribosyl)imidazole-4-carboxylate: step 1/2. In Pseudomonas putida (strain W619), this protein is Phosphoribosylaminoimidazole-succinocarboxamide synthase.